A 290-amino-acid chain; its full sequence is Ventral anterior homeobox 2 (290 aa).

Residues 1-17 (MGDGGAERDRGPARRAE) are compositionally biased toward basic and acidic residues. A disordered region spans residues 1-75 (MGDGGAERDR…GQPGPGEADH (75 aa)). The segment at residues 102–161 (PKRTRTSFTAEQLYRLEMEFQRCQYVVGRERTELARQLNLSETQVKVWFQNRRTKQKKDQ) is a DNA-binding region (homeobox). Positions 205–240 (PSLPGLPASHRGTSLGDPRNSSPRLNPLSSASASPP) are disordered. Residues 222–238 (PRNSSPRLNPLSSASAS) show a composition bias toward low complexity.

It belongs to the EMX homeobox family.

It is found in the nucleus. In terms of biological role, transcription factor that may function in dorsoventral specification of the forebrain. Regulates the expression of Wnt signaling antagonists including the expression of a truncated TCF7L2 isoform that cannot bind CTNNB1 and acts therefore as a potent dominant-negative Wnt antagonist. Plays a crucial role in eye development and, in particular, in the specification of the ventral optic vesicle. May be a regulator of axial polarization in the retina. This Homo sapiens (Human) protein is Ventral anterior homeobox 2 (VAX2).